We begin with the raw amino-acid sequence, 422 residues long: Serine--tRNA ligase (422 aa).

An L-serine-binding site is contributed by 230–232 (TAE). ATP is bound at residue 261 to 263 (RAE). Glu284 provides a ligand contact to L-serine. An ATP-binding site is contributed by 348-351 (EISS). Ser383 is a binding site for L-serine.

The protein belongs to the class-II aminoacyl-tRNA synthetase family. Type-1 seryl-tRNA synthetase subfamily. In terms of assembly, homodimer. The tRNA molecule binds across the dimer.

The protein resides in the cytoplasm. It catalyses the reaction tRNA(Ser) + L-serine + ATP = L-seryl-tRNA(Ser) + AMP + diphosphate + H(+). It carries out the reaction tRNA(Sec) + L-serine + ATP = L-seryl-tRNA(Sec) + AMP + diphosphate + H(+). It participates in aminoacyl-tRNA biosynthesis; selenocysteinyl-tRNA(Sec) biosynthesis; L-seryl-tRNA(Sec) from L-serine and tRNA(Sec): step 1/1. Catalyzes the attachment of serine to tRNA(Ser). Is also able to aminoacylate tRNA(Sec) with serine, to form the misacylated tRNA L-seryl-tRNA(Sec), which will be further converted into selenocysteinyl-tRNA(Sec). The polypeptide is Serine--tRNA ligase (Pelotomaculum thermopropionicum (strain DSM 13744 / JCM 10971 / SI)).